The sequence spans 433 residues: MASTFNIPCNAGTIKNFNNSQRNLGFSSNLGINFAKTRFSNCGDSGRIPSQLVVRASERRDNLTQQKTGLSIEECEAAVVAGNAPSAPPVPPTPKAPSGTPSVSPLSLGRRPRRNRTSPVFRAAFQETTLSPANVVYPLFIHEGEEDTPIGAMPGCYRLGWRHGLVEEVAKARDVVVNSIVVFPKPDALKSPTGDEAYNENGLVPRTIRMLKDKFPDLIIYTDVALDPYYYDGHDGIVTQHGVIMNDETVHQLCKQAVAQARAGADVVSPSDMMDGRVGAIRAALDAEGYSNVSIMSYTAKYASSFYGPFREALDSNPRFGDKKTYQMNPANYREALIETQEDESEGADILLVKPGLPYLDIIRLLRDNSDLPIAAYQVSGEYSMIKAGGVLKMIDEEKVMLESLLCLRRAGADIILTYFALQAARCLCGEKR.

Residues 1-56 constitute a chloroplast transit peptide; that stretch reads MASTFNIPCNAGTIKNFNNSQRNLGFSSNLGINFAKTRFSNCGDSGRIPSQLVVRA. Positions 83–115 are disordered; sequence NAPSAPPVPPTPKAPSGTPSVSPLSLGRRPRRN. Residues 86-95 are compositionally biased toward pro residues; the sequence is SAPPVPPTPK. The active-site Schiff-base intermediate with substrate is Lys301. 2 residues coordinate 5-aminolevulinate: Arg311 and Lys323. Residue Glu339 coordinates Mg(2+). Lys354 (schiff-base intermediate with substrate) is an active-site residue. 5-aminolevulinate contacts are provided by Ser380 and Tyr419.

Belongs to the ALAD family. In terms of assembly, homooctamer. It depends on Mg(2+) as a cofactor.

It is found in the plastid. The protein resides in the chloroplast. The catalysed reaction is 2 5-aminolevulinate = porphobilinogen + 2 H2O + H(+). It participates in porphyrin-containing compound metabolism; protoporphyrin-IX biosynthesis; coproporphyrinogen-III from 5-aminolevulinate: step 1/4. Catalyzes an early step in the biosynthesis of tetrapyrroles. Binds two molecules of 5-aminolevulinate per subunit, each at a distinct site, and catalyzes their condensation to form porphobilinogen. In Spinacia oleracea (Spinach), this protein is Delta-aminolevulinic acid dehydratase, chloroplastic (HEMB).